A 157-amino-acid polypeptide reads, in one-letter code: uncharacterized protein (157 aa).

Residues 1–17 (MSMKTKAAFHLVLFGLA) form the signal peptide. A lipid anchor (N-palmitoyl cysteine) is attached at Cys18. Residue Cys18 is the site of S-diacylglycerol cysteine attachment. 3 helical membrane passes run 42 to 64 (MVFD…YLYL), 98 to 120 (ASYI…YPLF), and 124 to 146 (IPFF…YVIS).

It localises to the cell membrane. This is an uncharacterized protein from Bacillus subtilis (strain 168).